Reading from the N-terminus, the 137-residue chain is Protein MGF 110-7L (137 aa).

The N-terminal stretch at 1 to 20 is a signal peptide; that stretch reads MLVIILGIIGLLASSNLVSS. Residues Asn69, Asn70, and Asn105 are each glycosylated (N-linked (GlcNAc...) asparagine; by host).

This sequence belongs to the asfivirus MGF 110 family.

In terms of biological role, plays a role in virus cell tropism, and may be required for efficient virus replication in macrophages. This is Protein MGF 110-7L from African swine fever virus (isolate Warthog/Namibia/Wart80/1980) (ASFV).